The primary structure comprises 92 residues: Small ribosomal subunit protein bS20 (92 aa).

Residues 1–24 (MANSAQARKRARQAAKANSHNSAL) are disordered.

Belongs to the bacterial ribosomal protein bS20 family.

Its function is as follows. Binds directly to 16S ribosomal RNA. The sequence is that of Small ribosomal subunit protein bS20 from Paraburkholderia xenovorans (strain LB400).